The following is a 203-amino-acid chain: Histidine biosynthesis bifunctional protein HisIE (203 aa).

The tract at residues 1-114 (MLTEQQRREL…FGDASHQWLF (114 aa)) is phosphoribosyl-AMP cyclohydrolase. The interval 115–203 (LYQLEQLLAE…VIDNLRKRHQ (89 aa)) is phosphoribosyl-ATP pyrophosphohydrolase.

This sequence in the N-terminal section; belongs to the PRA-CH family. It in the C-terminal section; belongs to the PRA-PH family.

Its subcellular location is the cytoplasm. It carries out the reaction 1-(5-phospho-beta-D-ribosyl)-ATP + H2O = 1-(5-phospho-beta-D-ribosyl)-5'-AMP + diphosphate + H(+). The catalysed reaction is 1-(5-phospho-beta-D-ribosyl)-5'-AMP + H2O = 1-(5-phospho-beta-D-ribosyl)-5-[(5-phospho-beta-D-ribosylamino)methylideneamino]imidazole-4-carboxamide. The protein operates within amino-acid biosynthesis; L-histidine biosynthesis; L-histidine from 5-phospho-alpha-D-ribose 1-diphosphate: step 2/9. Its pathway is amino-acid biosynthesis; L-histidine biosynthesis; L-histidine from 5-phospho-alpha-D-ribose 1-diphosphate: step 3/9. The protein is Histidine biosynthesis bifunctional protein HisIE (hisI) of Salmonella typhimurium (strain LT2 / SGSC1412 / ATCC 700720).